We begin with the raw amino-acid sequence, 332 residues long: 2,3-diketo-L-gulonate reductase (332 aa).

The active-site Proton donor is His44. NAD(+) contacts are provided by residues Ile168–Ser174, Trp224–Lys225, and Gly304–Glu306.

This sequence belongs to the LDH2/MDH2 oxidoreductase family. DlgD subfamily. As to quaternary structure, homodimer.

It is found in the cytoplasm. It catalyses the reaction 3-dehydro-L-gulonate + NAD(+) = 2,3-dioxo-L-gulonate + NADH + H(+). The catalysed reaction is 3-dehydro-L-gulonate + NADP(+) = 2,3-dioxo-L-gulonate + NADPH + H(+). Catalyzes the reduction of 2,3-diketo-L-gulonate in the presence of NADH, to form 3-keto-L-gulonate. The protein is 2,3-diketo-L-gulonate reductase of Escherichia coli O17:K52:H18 (strain UMN026 / ExPEC).